A 61-amino-acid polypeptide reads, in one-letter code: Probable tautomerase SSP1389 (61 aa).

The active-site Proton acceptor; via imino nitrogen is proline 2.

Belongs to the 4-oxalocrotonate tautomerase family.

The protein is Probable tautomerase SSP1389 of Staphylococcus saprophyticus subsp. saprophyticus (strain ATCC 15305 / DSM 20229 / NCIMB 8711 / NCTC 7292 / S-41).